The primary structure comprises 532 residues: Pre-piRNA 3'-exonuclease trimmer (532 aa).

Mg(2+) contacts are provided by aspartate 28, glutamate 30, aspartate 270, and aspartate 365. The helical transmembrane segment at alanine 503–isoleucine 523 threads the bilayer.

This sequence belongs to the CAF1 family. In terms of assembly, interacts with Papi/Tdrkh; interaction takes place on the mitochondrial surface and recruits PNLDC1/trimmer to PIWI-bound pre-piRNAs. Requires Mg(2+) as cofactor.

The protein resides in the mitochondrion outer membrane. Its function is as follows. 3'-5' exonuclease that specifically cleaves precursor piRNAs (pre-piRNAs) at their 3' ends. Trims pre-piRNAs to their mature size, a process required for piRNAs maturation and stabilization, and subsequent pre-piRNAs 2'-O-methylation. The piRNA metabolic process mediates the repression of transposable elements during meiosis by forming complexes composed of piRNAs and Piwi proteins and govern the methylation and subsequent repression of transposons. This is Pre-piRNA 3'-exonuclease trimmer from Bombyx mori (Silk moth).